The chain runs to 105 residues: Small ribosomal subunit protein uS10 (105 aa).

This sequence belongs to the universal ribosomal protein uS10 family. In terms of assembly, part of the 30S ribosomal subunit.

Functionally, involved in the binding of tRNA to the ribosomes. In Lawsonia intracellularis (strain PHE/MN1-00), this protein is Small ribosomal subunit protein uS10.